A 499-amino-acid chain; its full sequence is MAEKLMKYADATKKYDVVFGLETHVELSTNTKLFCPAHIEFGGEPNTELTPVSLGLPGSLPVINKTAVDYAIKLGLALHCEIAEWSQFARKNYFYPDMPRDYQISQYDKPTNGNGYLDVELEDGTVFRVPIERAHIEDDAGKNTHVGGADGRIEGADHSLVDYNRAGVPLIEIVTKPIEGAGDRAPEIAGAYVRAIRDIVRALNISHARMEQGNMRADVNVSLRPSPDAPYGTRSETKNVNSFRGIEKTIQYEIRRQAARLDDGKEILQETRHWDEATQTTAGGRLKSDADDYRYFPDPDLVMLHITKEHIEEMKAQMPEMPRERRNRLKSEWGLSDLQMRDILNADALDLIEETVKAGAKAAGARKWWLGELSREANAKGVSLEELPITPADVAEVEKLIASGKLNDKLAKQTVEGVLKGEGTPDEVVKKHDYKIVEDNGAIEAAVDAAFEANPDVVEKLKSGNMKPMGVIIGAVMKATRGQADAKAVTKVVMGKIKG.

The protein belongs to the GatB/GatE family. GatB subfamily. Heterotrimer of A, B and C subunits.

It catalyses the reaction L-glutamyl-tRNA(Gln) + L-glutamine + ATP + H2O = L-glutaminyl-tRNA(Gln) + L-glutamate + ADP + phosphate + H(+). The catalysed reaction is L-aspartyl-tRNA(Asn) + L-glutamine + ATP + H2O = L-asparaginyl-tRNA(Asn) + L-glutamate + ADP + phosphate + 2 H(+). Allows the formation of correctly charged Asn-tRNA(Asn) or Gln-tRNA(Gln) through the transamidation of misacylated Asp-tRNA(Asn) or Glu-tRNA(Gln) in organisms which lack either or both of asparaginyl-tRNA or glutaminyl-tRNA synthetases. The reaction takes place in the presence of glutamine and ATP through an activated phospho-Asp-tRNA(Asn) or phospho-Glu-tRNA(Gln). The chain is Aspartyl/glutamyl-tRNA(Asn/Gln) amidotransferase subunit B from Bifidobacterium longum (strain DJO10A).